Reading from the N-terminus, the 66-residue chain is Beta-defensin 134 (66 aa).

Residues 1 to 19 (MKPLLVVFVFLFLWDPVLA) form the signal peptide. Cystine bridges form between Cys-32/Cys-58, Cys-38/Cys-52, and Cys-42/Cys-59.

The protein belongs to the beta-defensin family.

It is found in the secreted. Its function is as follows. Has antibacterial activity. The chain is Beta-defensin 134 (DEFB134) from Homo sapiens (Human).